Consider the following 403-residue polypeptide: Putative F-box protein At5g41500 (403 aa).

One can recognise an F-box domain in the interval 2-47; that stretch reads ATTISNLPRELIEEILSRVPLRAMKAMRLTCKSWNNLSKSESFMKM.

The chain is Putative F-box protein At5g41500 from Arabidopsis thaliana (Mouse-ear cress).